Consider the following 500-residue polypeptide: Intermediate filament protein ifc-1 (500 aa).

The tract at residues 1–36 (MSLYGGIPTNLVSGMSSAGAICTTQIRDAREREKRE) is head. The region spanning 33–383 (EKREIGLLND…VLLNGANVTT (351 aa)) is the IF rod domain. A coil 1A region spans residues 37-68 (IGLLNDRLADYIEKVRFLKAQNHVLSHDIEIL). Residues 69–81 (RRGFSGGGHISSF) form a linker 1 region. A coil 1B region spans residues 82-219 (FESEISNCTV…TENSSRIEQE (138 aa)). A linker 12 region spans residues 220–237 (LIYIHRDTTLENRDYFRQ). The segment at 238–383 (ELQAAMRDIR…VLLNGANVTT (146 aa)) is coil 2. The interval 384-496 (YVSNSTGAAG…RHHESSYSYS (113 aa)) is tail.

It belongs to the intermediate filament family.

The protein resides in the cytoplasm. Cytoplasmic intermediate filaments provide mechanical strength to cells. Not essential protein. The sequence is that of Intermediate filament protein ifc-1 (ifc-1) from Caenorhabditis elegans.